The sequence spans 517 residues: Cytochrome P450 monooxygenase polD (517 aa).

A helical transmembrane segment spans residues 5 to 27 (VVLVGIVVLVLAYLSSTGKVYPH). A heme-binding site is contributed by cysteine 435.

Belongs to the cytochrome P450 family. Requires heme as cofactor.

It localises to the membrane. Its function is as follows. Cytochrome P450 monooxygenase; part of the gene cluster that mediates the biosynthesis of antifungal fernane-type triterpenoid polytolypin. PolD doe not seem to be involved in the biosynthesis of polytolypin. Within the pathway, the triterpene cyclase polA first catalyzes the cyclization of 2,3-oxidosqualene to motiol, polc converts the 4-alpha-methyl group of motiol to a carboxyl group, polB is responsible for appending a hydroxyl group at the 2-alpha position and polE is a dual functional P450, which can catalyze the formation of both the 1-beta-hydroxyl group and 10-beta-carboxyl group. This Polytolypa hystricis (strain UAMH7299) protein is Cytochrome P450 monooxygenase polD.